A 369-amino-acid chain; its full sequence is Muscleblind-like protein 1 (369 aa).

4 C3H1-type zinc fingers span residues 13-41, 47-73, 178-206, and 214-240; these read WLTL…HPSK, NGRV…HPPP, TDRL…HPAD, and DNTV…HPPA.

It belongs to the muscleblind family.

It is found in the nucleus. The protein localises to the cytoplasm. The protein resides in the cytoplasmic granule. Its function is as follows. Involved in pre-mRNA alternative splicing regulation. Binds to CUG triplet repeat in RNA. This is Muscleblind-like protein 1 (MBNL1) from Gallus gallus (Chicken).